The following is an 830-amino-acid chain: WD repeat-containing protein 75 (830 aa).

WD repeat units follow at residues 4–42 (EGVR…KVYS), 46–85 (EECV…KLWD), 89–130 (GILI…QLVS), 144–183 (RQLT…YFFK), 192–230 (LPST…RLWR), 236–275 (QKYT…VEWR), 278–317 (SEKN…TVIH), 323–361 (SAVI…QFYS), and 375–422 (QQEY…KLWN). A Glycyl lysine isopeptide (Lys-Gly) (interchain with G-Cter in SUMO2) cross-link involves residue Lys426. 4 WD repeats span residues 429–473 (GFVL…KVWI), 486–524 (AWTC…TIWD), 528–568 (WELK…CCWN), and 573–610 (SIQW…FVFK). Ser663 and Ser671 each carry phosphoserine. Residue Lys675 forms a Glycyl lysine isopeptide (Lys-Gly) (interchain with G-Cter in SUMO2) linkage. The segment at 761–807 (KSAEEVPDDVDMEGNKESDDSDEEYDLTEKDKETNNNTDLGEDAIHQ) is disordered. Phosphoserine occurs at positions 778 and 781. Tyr785 carries the post-translational modification Phosphotyrosine. Ser811 is modified (phosphoserine).

As to quaternary structure, component of the proposed t-UTP subcomplex of the ribosomal small subunit (SSU) processome. SSU processome is composed of more than 70 proteins and the RNA chaperone small nucleolar RNA (snoRNA) U3.

It localises to the nucleus. The protein resides in the nucleolus. Functionally, ribosome biogenesis factor. Part of the small subunit (SSU) processome, first precursor of the small eukaryotic ribosomal subunit. During the assembly of the SSU processome in the nucleolus, many ribosome biogenesis factors, an RNA chaperone and ribosomal proteins associate with the nascent pre-rRNA and work in concert to generate RNA folding, modifications, rearrangements and cleavage as well as targeted degradation of pre-ribosomal RNA by the RNA exosome. Involved in nucleolar processing of pre-18S ribosomal RNA. Required for optimal pre-ribosomal RNA transcription by RNA polymerase I. This Mus musculus (Mouse) protein is WD repeat-containing protein 75 (Wdr75).